The primary structure comprises 407 residues: 5-aminolevulinate synthase 2 (407 aa).

Residues arginine 21 and serine 137 each coordinate substrate. Residues serine 189, histidine 217, and threonine 245 each coordinate pyridoxal 5'-phosphate. Lysine 248 is an active-site residue. Lysine 248 bears the N6-(pyridoxal phosphate)lysine mark. 2 residues coordinate pyridoxal 5'-phosphate: threonine 277 and threonine 278. A substrate-binding site is contributed by threonine 363.

The protein belongs to the class-II pyridoxal-phosphate-dependent aminotransferase family. As to quaternary structure, homodimer. The cofactor is pyridoxal 5'-phosphate.

The catalysed reaction is succinyl-CoA + glycine + H(+) = 5-aminolevulinate + CO2 + CoA. The protein operates within porphyrin-containing compound metabolism; protoporphyrin-IX biosynthesis; 5-aminolevulinate from glycine: step 1/1. This Cereibacter sphaeroides (strain ATCC 17023 / DSM 158 / JCM 6121 / CCUG 31486 / LMG 2827 / NBRC 12203 / NCIMB 8253 / ATH 2.4.1.) (Rhodobacter sphaeroides) protein is 5-aminolevulinate synthase 2 (hemT).